The primary structure comprises 516 residues: MPTDMELSPSNVARHRLAVLAAHLSAASLEPPVMASSLEAHCVSAQTMVAPPELVKGTLTIVDERTGKRYQVQVSEEGTIKATDLKKITTGPNDKGLKLYDPGYLNTAPVRSSISYIDGDLGILRYRGYPIEELAESSTYVEVAYLLMYGNLPSQSQLADWEFAISQHSAVPQGLVDIIQAMPHDAHPMGVLVSAMSALSVFHPDANPALRGQDLYKSKQVRDKQIARIIGKAPTIAAAAYLRLAGRPPVLPSSNLSYSENFLYMLDSLGNRSYKPNPRLARVLDILFILHAEHEMNCSTSAARHLASSGVDVFTALSGAVGALYGPLHGGANEAVLKMLSEIGTVNNIPEFIEGVKNRKRKMSGFGHRVYKNYDPRAKVIRKLAEEVFSIVGRDPLIEVAVALEKAALSDEYFVKRKLYPNVDFYSGLIYRAMGFPPEFFTVLFAIPRMAGYLAHWRESLDDPDTKIIRPQQVYTGEWLRHYIPPNERLVPAKADRLGQVSVSNASKRRLSGSGI.

A glyoxysome-targeting transit peptide spans 1-43 (MPTDMELSPSNVARHRLAVLAAHLSAASLEPPVMASSLEAHCV). Catalysis depends on residues histidine 329, histidine 368, and aspartate 424.

This sequence belongs to the citrate synthase family.

The protein localises to the glyoxysome. The enzyme catalyses oxaloacetate + acetyl-CoA + H2O = citrate + CoA + H(+). The protein operates within carbohydrate metabolism; glyoxylate cycle; isocitrate from oxaloacetate: step 1/2. The protein is Citrate synthase, glyoxysomal of Cucurbita maxima (Pumpkin).